A 200-amino-acid chain; its full sequence is Large ribosomal subunit protein uL4 (200 aa).

The interval 43–65 (RAQKTRSEVSGGGAKPWRQKGTG) is disordered.

It belongs to the universal ribosomal protein uL4 family. In terms of assembly, part of the 50S ribosomal subunit.

In terms of biological role, one of the primary rRNA binding proteins, this protein initially binds near the 5'-end of the 23S rRNA. It is important during the early stages of 50S assembly. It makes multiple contacts with different domains of the 23S rRNA in the assembled 50S subunit and ribosome. Forms part of the polypeptide exit tunnel. In Aliivibrio salmonicida (strain LFI1238) (Vibrio salmonicida (strain LFI1238)), this protein is Large ribosomal subunit protein uL4.